The following is a 339-amino-acid chain: Cathepsin B (339 aa).

The signal sequence occupies residues 1-17 (MWWSLIPLSCLLALTSA). A propeptide spans 18-79 (HDKPSSHPLS…ERVGFSEDIN (62 aa)) (activation peptide). Intrachain disulfides connect cysteine 93–cysteine 122, cysteine 105–cysteine 150, cysteine 141–cysteine 207, cysteine 142–cysteine 146, cysteine 179–cysteine 211, and cysteine 187–cysteine 198. The active site involves cysteine 108. N-linked (GlcNAc...) asparagine glycosylation occurs at asparagine 192. An N6-acetyllysine modification is found at lysine 220. Active-site residues include histidine 278 and asparagine 298. Residues 334-339 (QYWGRF) constitute a propeptide that is removed on maturation.

The protein belongs to the peptidase C1 family. In terms of assembly, dimer of a heavy chain and a light chain cross-linked by a disulfide bond. Interacts with SRPX2. Directly interacts with SHKBP1. Expressed in the epithelial cells of the prostate and mammary gland.

Its subcellular location is the lysosome. The protein localises to the melanosome. The protein resides in the secreted. It is found in the extracellular space. It localises to the apical cell membrane. It catalyses the reaction Hydrolysis of proteins with broad specificity for peptide bonds. Preferentially cleaves -Arg-Arg-|-Xaa bonds in small molecule substrates (thus differing from cathepsin L). In addition to being an endopeptidase, shows peptidyl-dipeptidase activity, liberating C-terminal dipeptides.. Thiol protease which is believed to participate in intracellular degradation and turnover of proteins. Cleaves matrix extracellular phosphoglycoprotein MEPE. Involved in the solubilization of cross-linked TG/thyroglobulin in the thyroid follicle lumen. Has also been implicated in tumor invasion and metastasis. This chain is Cathepsin B (Ctsb), found in Rattus norvegicus (Rat).